The sequence spans 409 residues: NADH-quinone oxidoreductase subunit D (409 aa).

The protein belongs to the complex I 49 kDa subunit family. NDH-1 is composed of 14 different subunits. Subunits NuoB, C, D, E, F, and G constitute the peripheral sector of the complex.

The protein localises to the cell inner membrane. The enzyme catalyses a quinone + NADH + 5 H(+)(in) = a quinol + NAD(+) + 4 H(+)(out). In terms of biological role, NDH-1 shuttles electrons from NADH, via FMN and iron-sulfur (Fe-S) centers, to quinones in the respiratory chain. The immediate electron acceptor for the enzyme in this species is believed to be ubiquinone. Couples the redox reaction to proton translocation (for every two electrons transferred, four hydrogen ions are translocated across the cytoplasmic membrane), and thus conserves the redox energy in a proton gradient. The protein is NADH-quinone oxidoreductase subunit D of Campylobacter curvus (strain 525.92).